Here is a 230-residue protein sequence, read N- to C-terminus: Large ribosomal subunit protein uL1 (230 aa).

This sequence belongs to the universal ribosomal protein uL1 family. Part of the 50S ribosomal subunit.

In terms of biological role, binds directly to 23S rRNA. The L1 stalk is quite mobile in the ribosome, and is involved in E site tRNA release. Protein L1 is also a translational repressor protein, it controls the translation of the L11 operon by binding to its mRNA. This chain is Large ribosomal subunit protein uL1, found in Staphylococcus aureus (strain Mu3 / ATCC 700698).